We begin with the raw amino-acid sequence, 425 residues long: Putative dipeptidase MGYG_00085 (425 aa).

A signal peptide spans 1–31 (MAPERRSRLSETAGLFVSLLALTSIVPVQAV). Positions 56, 58, and 168 each coordinate Zn(2+). A disulfide bridge connects residues Cys-107 and Cys-197. His-195 serves as a coordination point for substrate. Zn(2+)-binding residues include His-239 and His-260. Positions 271 and 331 each coordinate substrate. N-linked (GlcNAc...) asparagine glycosylation occurs at Asn-403.

This sequence belongs to the metallo-dependent hydrolases superfamily. Peptidase M19 family. It depends on Zn(2+) as a cofactor.

The enzyme catalyses an L-aminoacyl-L-amino acid + H2O = 2 an L-alpha-amino acid. Hydrolyzes a wide range of dipeptides. This is Putative dipeptidase MGYG_00085 from Arthroderma gypseum (strain ATCC MYA-4604 / CBS 118893) (Microsporum gypseum).